Here is a 440-residue protein sequence, read N- to C-terminus: Argininosuccinate lyase (440 aa).

The protein belongs to the lyase 1 family. Argininosuccinate lyase subfamily.

Its subcellular location is the cytoplasm. It catalyses the reaction 2-(N(omega)-L-arginino)succinate = fumarate + L-arginine. It functions in the pathway amino-acid biosynthesis; L-arginine biosynthesis; L-arginine from L-ornithine and carbamoyl phosphate: step 3/3. The sequence is that of Argininosuccinate lyase from Clostridium botulinum (strain 657 / Type Ba4).